The sequence spans 152 residues: tRNA-specific adenosine deaminase (152 aa).

One can recognise a CMP/dCMP-type deaminase domain in the interval 2–111; the sequence is AERTHFMELA…AQDPKGGAVE (110 aa). Histidine 53 serves as a coordination point for Zn(2+). Catalysis depends on glutamate 55, which acts as the Proton donor. 2 residues coordinate Zn(2+): cysteine 83 and cysteine 86.

It belongs to the cytidine and deoxycytidylate deaminase family. Homodimer. Zn(2+) is required as a cofactor.

It carries out the reaction adenosine(34) in tRNA + H2O + H(+) = inosine(34) in tRNA + NH4(+). Catalyzes the deamination of adenosine to inosine at the wobble position 34 of tRNA(Arg2). This is tRNA-specific adenosine deaminase from Agrobacterium fabrum (strain C58 / ATCC 33970) (Agrobacterium tumefaciens (strain C58)).